The chain runs to 185 residues: Glycerol-3-phosphate acyltransferase 4 (185 aa).

6 consecutive transmembrane segments (helical) span residues Met1 to Ala21, Leu47 to Ile67, Leu69 to Leu89, Leu113 to Phe133, Val137 to Leu157, and Pro158 to Ile178.

This sequence belongs to the PlsY family. Probably interacts with PlsX.

It localises to the cell membrane. The catalysed reaction is an acyl phosphate + sn-glycerol 3-phosphate = a 1-acyl-sn-glycero-3-phosphate + phosphate. It participates in lipid metabolism; phospholipid metabolism. Functionally, catalyzes the transfer of an acyl group from acyl-phosphate (acyl-PO(4)) to glycerol-3-phosphate (G3P) to form lysophosphatidic acid (LPA). This enzyme utilizes acyl-phosphate as fatty acyl donor, but not acyl-CoA or acyl-ACP. The protein is Glycerol-3-phosphate acyltransferase 4 of Dehalococcoides mccartyi (strain ATCC BAA-2266 / KCTC 15142 / 195) (Dehalococcoides ethenogenes (strain 195)).